A 921-amino-acid chain; its full sequence is Protein translocase subunit SecA (921 aa).

Residues glutamine 85, 103 to 107 (GEGKT), and aspartate 514 contribute to the ATP site. Positions 905, 907, 916, and 917 each coordinate Zn(2+).

Belongs to the SecA family. Monomer and homodimer. Part of the essential Sec protein translocation apparatus which comprises SecA, SecYEG and auxiliary proteins SecDF-YajC and YidC. Zn(2+) is required as a cofactor.

The protein resides in the cell inner membrane. It is found in the cytoplasm. The enzyme catalyses ATP + H2O + cellular proteinSide 1 = ADP + phosphate + cellular proteinSide 2.. Part of the Sec protein translocase complex. Interacts with the SecYEG preprotein conducting channel. Has a central role in coupling the hydrolysis of ATP to the transfer of proteins into and across the cell membrane, serving both as a receptor for the preprotein-SecB complex and as an ATP-driven molecular motor driving the stepwise translocation of polypeptide chains across the membrane. The polypeptide is Protein translocase subunit SecA (Herminiimonas arsenicoxydans).